The sequence spans 296 residues: Probable AP endonuclease (296 aa).

Cys-16 and Cys-20 are disulfide-bonded. His-78, His-115, Glu-142, His-182, His-218, Asp-231, His-233, and Glu-271 together coordinate Zn(2+).

Belongs to the AP endonuclease 2 family. Requires Zn(2+) as cofactor.

It is found in the host nucleus. The protein resides in the host cytoplasm. The protein localises to the virion. In terms of biological role, endonuclease of the viral base excision repair system that catalyzes DNA cleavage reaction at the apurinic or apyrimidinic sites (AP sites). Cleaves phosphodiester bonds on the 5' side of AP sites. In addition to endonuclease activity, the AP endonuclease has a proofreading 3'-5' exonuclease activity that is considerably more efficient in the elimination of a mismatch than in that of a correctly paired base. Displays 3'-phosphatase and 3'-repair diesterase activities. The single nucleotide gaps generated by the AP endonuclease are filled by the viral repair DNA polymerase X and the DNA ligase. This is Probable AP endonuclease from Ornithodoros (relapsing fever ticks).